A 114-amino-acid chain; its full sequence is T cell receptor beta variable 5-8 (114 aa).

An N-terminal signal peptide occupies residues 1–21 (MGPRLLFWALLCLLGTGPVEA). The Ig-like domain maps to 22-114 (GVTQSPTHLI…SALYLCASSL (93 aa)). Cys-42 and Cys-110 form a disulfide bridge. Asn-90 carries an N-linked (GlcNAc...) asparagine glycan.

As to quaternary structure, alpha-beta TR is a heterodimer composed of an alpha and beta chain; disulfide-linked. The alpha-beta TR is associated with the transmembrane signaling CD3 coreceptor proteins to form the TR-CD3 (TcR or TCR). The assembly of alpha-beta TR heterodimers with CD3 occurs in the endoplasmic reticulum where a single alpha-beta TR heterodimer associates with one CD3D-CD3E heterodimer, one CD3G-CD3E heterodimer and one CD247 homodimer forming a stable octameric structure. CD3D-CD3E and CD3G-CD3E heterodimers preferentially associate with TR alpha and TR beta chains, respectively. The association of the CD247 homodimer is the last step of TcR assembly in the endoplasmic reticulum and is required for transport to the cell surface.

It localises to the cell membrane. V region of the variable domain of T cell receptor (TR) beta chain that participates in the antigen recognition. Alpha-beta T cell receptors are antigen specific receptors which are essential to the immune response and are present on the cell surface of T lymphocytes. Recognize peptide-major histocompatibility (MH) (pMH) complexes that are displayed by antigen presenting cells (APC), a prerequisite for efficient T cell adaptive immunity against pathogens. Binding of alpha-beta TR to pMH complex initiates TR-CD3 clustering on the cell surface and intracellular activation of LCK that phosphorylates the ITAM motifs of CD3G, CD3D, CD3E and CD247 enabling the recruitment of ZAP70. In turn ZAP70 phosphorylates LAT, which recruits numerous signaling molecules to form the LAT signalosome. The LAT signalosome propagates signal branching to three major signaling pathways, the calcium, the mitogen-activated protein kinase (MAPK) kinase and the nuclear factor NF-kappa-B (NF-kB) pathways, leading to the mobilization of transcription factors that are critical for gene expression and essential for T cell growth and differentiation. The T cell repertoire is generated in the thymus, by V-(D)-J rearrangement. This repertoire is then shaped by intrathymic selection events to generate a peripheral T cell pool of self-MH restricted, non-autoaggressive T cells. Post-thymic interaction of alpha-beta TR with the pMH complexes shapes TR structural and functional avidity. In Homo sapiens (Human), this protein is T cell receptor beta variable 5-8.